A 2222-amino-acid polypeptide reads, in one-letter code: Protein SWEETIE (2222 aa).

HEAT repeat units follow at residues leucine 37–leucine 75, serine 228–histidine 265, serine 331–aspartate 368, proline 510–glutamate 540, alanine 541–glutamate 578, cysteine 611–isoleucine 648, glutamine 768–alanine 807, methionine 898–alanine 936, glutamine 968–isoleucine 1008, and valine 1029–valine 1066. Residues isoleucine 1133 to proline 1165 form a disordered region. HEAT repeat units lie at residues methionine 1238–glutamine 1269, tyrosine 1270–isoleucine 1306, valine 1312–serine 1354, valine 1372–lysine 1410, glutamate 1434–glutamate 1474, aspartate 1550–lysine 1586, valine 1783–asparagine 1820, glycine 1836–threonine 1874, glycine 1880–histidine 1917, and alanine 1966–threonine 2006. The tract at residues glutamate 1992–alanine 2203 is disordered. Over residues threonine 1996–serine 2009 the composition is skewed to polar residues. The segment covering glycine 2010–aspartate 2027 has biased composition (acidic residues). A compositionally biased stretch (polar residues) spans threonine 2028–glycine 2040. Residues glutamine 2062–aspartate 2072 are compositionally biased toward acidic residues. 2 stretches are compositionally biased toward basic and acidic residues: residues aspartate 2073–valine 2096 and threonine 2108–valine 2124. Polar residues predominate over residues asparagine 2150–isoleucine 2164. The segment covering serine 2191–glycine 2202 has biased composition (basic and acidic residues).

This sequence belongs to the HEATR5 family.

May regulate multiple metabolic, hormonal and stress-related pathways. Required for carbohydrate metabolism and homoeostasis. May also monitor ethylene biosynthesis and senescence. This chain is Protein SWEETIE, found in Arabidopsis thaliana (Mouse-ear cress).